A 216-amino-acid polypeptide reads, in one-letter code: Kynurenine formamidase (216 aa).

Substrate is bound at residue Trp-25. Positions 55, 59, and 61 each coordinate Zn(2+). The active-site Proton donor/acceptor is His-65. His-167 and Glu-179 together coordinate Zn(2+).

This sequence belongs to the Cyclase 1 superfamily. KynB family. Homodimer. It depends on Zn(2+) as a cofactor.

The enzyme catalyses N-formyl-L-kynurenine + H2O = L-kynurenine + formate + H(+). Its pathway is amino-acid degradation; L-tryptophan degradation via kynurenine pathway; L-kynurenine from L-tryptophan: step 2/2. Catalyzes the hydrolysis of N-formyl-L-kynurenine to L-kynurenine, the second step in the kynurenine pathway of tryptophan degradation. This is Kynurenine formamidase from Cupriavidus necator (strain ATCC 17699 / DSM 428 / KCTC 22496 / NCIMB 10442 / H16 / Stanier 337) (Ralstonia eutropha).